A 207-amino-acid polypeptide reads, in one-letter code: Small ribosomal subunit protein uS4 (207 aa).

A compositionally biased stretch (basic and acidic residues) spans 31–40 (KCRLDNKPGQ). Positions 31 to 56 (KCRLDNKPGQDGRTSGSRTSDYGNQL) are disordered. Over residues 42–53 (GRTSGSRTSDYG) the composition is skewed to polar residues. One can recognise an S4 RNA-binding domain in the interval 97–158 (SRLDNVVYRM…KAKKQARITE (62 aa)).

Belongs to the universal ribosomal protein uS4 family. As to quaternary structure, part of the 30S ribosomal subunit. Contacts protein S5. The interaction surface between S4 and S5 is involved in control of translational fidelity.

Functionally, one of the primary rRNA binding proteins, it binds directly to 16S rRNA where it nucleates assembly of the body of the 30S subunit. Its function is as follows. With S5 and S12 plays an important role in translational accuracy. This Polynucleobacter necessarius subsp. necessarius (strain STIR1) protein is Small ribosomal subunit protein uS4.